Reading from the N-terminus, the 253-residue chain is Major prion protein (253 aa).

The signal sequence occupies residues 1–22; that stretch reads MANLGCWMLVLFVATWSDLGLC. The segment at 23 to 38 is interaction with ADGRG6; the sequence is KKRPKPGGWNTGGSRY. The tract at residues 23–230 is interaction with GRB2, ERI3 and SYN1; sequence KKRPKPGGWN…ESQAYYQRGS (208 aa). The interval 26–108 is disordered; sequence PKPGGWNTGG…WNKPSKPKTS (83 aa). Tandem repeats lie at residues 51 to 59, 60 to 67, 68 to 75, 76 to 83, and 84 to 91. Residues 51-91 form a 5 X 8 AA tandem repeats of P-H-G-G-G-W-G-Q region; sequence PQGGGGWGQPHGGGWGQPHGGGWGQPHGGGWGQPHGGGWGQ. The segment covering 52-95 has biased composition (gly residues); the sequence is QGGGGWGQPHGGGWGQPHGGGWGQPHGGGWGQPHGGGWGQGGGT. The Cu(2+) site is built by H61, G62, G63, H69, G70, G71, H77, G78, G79, H85, G86, and G87. A disulfide bridge links C179 with C214. 2 N-linked (GlcNAc...) asparagine glycosylation sites follow: N181 and N197. A lipid anchor (GPI-anchor amidated serine) is attached at S230. Residues 231 to 253 constitute a propeptide, removed in mature form; sequence SMVLFSSPPVILLISFLIFLIVG.

This sequence belongs to the prion family. As to quaternary structure, monomer and homodimer. Has a tendency to aggregate into amyloid fibrils containing a cross-beta spine, formed by a steric zipper of superposed beta-strands. Soluble oligomers may represent an intermediate stage on the path to fibril formation. Copper binding may promote oligomerization. Interacts with GRB2, APP, ERI3/PRNPIP and SYN1. Mislocalized cytosolically exposed PrP interacts with MGRN1; this interaction alters MGRN1 subcellular location and causes lysosomal enlargement. Interacts with APP. Interacts with KIAA1191. Interacts with ADGRG6.

The protein localises to the cell membrane. It is found in the golgi apparatus. Functionally, its primary physiological function is unclear. May play a role in neuronal development and synaptic plasticity. May be required for neuronal myelin sheath maintenance. May promote myelin homeostasis through acting as an agonist for ADGRG6 receptor. May play a role in iron uptake and iron homeostasis. Soluble oligomers are toxic to cultured neuroblastoma cells and induce apoptosis (in vitro). Association with GPC1 (via its heparan sulfate chains) targets PRNP to lipid rafts. Also provides Cu(2+) or Zn(2+) for the ascorbate-mediated GPC1 deaminase degradation of its heparan sulfate side chains. The sequence is that of Major prion protein (PRNP) from Colobus guereza (Mantled guereza).